A 232-amino-acid chain; its full sequence is Lipoprotein-releasing system ATP-binding protein LolD (232 aa).

The region spanning I6–V231 is the ABC transporter domain. Position 42-49 (G42–S49) interacts with ATP.

It belongs to the ABC transporter superfamily. Lipoprotein translocase (TC 3.A.1.125) family. In terms of assembly, the complex is composed of two ATP-binding proteins (LolD) and two transmembrane proteins (LolC and LolE).

The protein resides in the cell inner membrane. Part of the ABC transporter complex LolCDE involved in the translocation of mature outer membrane-directed lipoproteins, from the inner membrane to the periplasmic chaperone, LolA. Responsible for the formation of the LolA-lipoprotein complex in an ATP-dependent manner. In Pseudoalteromonas translucida (strain TAC 125), this protein is Lipoprotein-releasing system ATP-binding protein LolD.